Consider the following 398-residue polypeptide: Putative F-box/kelch-repeat protein At2g29780 (398 aa).

The disordered stretch occupies residues Met-1 to Arg-46. The segment covering Lys-19–Asp-32 has biased composition (basic and acidic residues). In terms of domain architecture, F-box spans Pro-43–Ser-90. Kelch repeat units lie at residues Lys-148–Gly-195, Lys-196–Thr-241, Val-243–Asp-289, and Asp-295–Leu-342.

This is Putative F-box/kelch-repeat protein At2g29780 from Arabidopsis thaliana (Mouse-ear cress).